The following is a 404-amino-acid chain: Coenzyme F420H(2) oxidase (404 aa).

Residues His-83, Glu-85, Asp-87, His-88, His-151, Asp-170, and His-233 each coordinate Fe cation. The Flavodoxin-like domain occupies 259-399; sequence VTVIYDTMHG…ACFEAGRKLA (141 aa). FMN-binding positions include 265–270, 317–320, and 351–356; these read TMHGST, TIYD, and SMGGNG.

It in the N-terminal section; belongs to the zinc metallo-hydrolase group 3 family. As to quaternary structure, homodimer. Homotetramer. The tetramer is composed of two functional dimers. The cofactor is FMN. Requires Fe cation as cofactor.

It carries out the reaction 2 reduced coenzyme F420-(gamma-L-Glu)(n) + O2 = 2 oxidized coenzyme F420-(gamma-L-Glu)(n) + 2 H2O + 2 H(+). Catalyzes the oxidation of F420H(2) with O(2). May be involved in O(2) detoxification, reducing the intracellular O(2) concentration to a level allowing growth at the expense of methane formation. The polypeptide is Coenzyme F420H(2) oxidase (Methanothermobacter marburgensis (strain ATCC BAA-927 / DSM 2133 / JCM 14651 / NBRC 100331 / OCM 82 / Marburg) (Methanobacterium thermoautotrophicum)).